The sequence spans 62 residues: MKASELRDLTVEELEKKVEELNQELFNLKFQLATGQLENSARLPQTRRDIARVHTVLRQKRS.

This sequence belongs to the universal ribosomal protein uL29 family.

This is Large ribosomal subunit protein uL29 from Syntrophotalea carbinolica (strain DSM 2380 / NBRC 103641 / GraBd1) (Pelobacter carbinolicus).